The following is a 142-amino-acid chain: Alpha-lactalbumin (142 aa).

The first 19 residues, 1–19 (MMSFVSLLLVGILFHATQA), serve as a signal peptide directing secretion. Residues 20 to 142 (EQLTKCEVFR…KLDQWLCEKL (123 aa)) enclose the C-type lysozyme domain. Cystine bridges form between C25–C139, C47–C130, C80–C96, and C92–C110. Residue N64 is glycosylated (N-linked (GlcNAc...) asparagine). Positions 98, 101, 103, 106, and 107 each coordinate Ca(2+).

This sequence belongs to the glycosyl hydrolase 22 family. Lactose synthase (LS) is a heterodimer of a catalytic component, beta1,4-galactosyltransferase (beta4Gal-T1) and a regulatory component, alpha-lactalbumin (LA). In terms of tissue distribution, mammary gland specific. Secreted in milk.

It localises to the secreted. Its function is as follows. Regulatory subunit of lactose synthase, changes the substrate specificity of galactosyltransferase in the mammary gland making glucose a good acceptor substrate for this enzyme. This enables LS to synthesize lactose, the major carbohydrate component of milk. In other tissues, galactosyltransferase transfers galactose onto the N-acetylglucosamine of the oligosaccharide chains in glycoproteins. This is Alpha-lactalbumin (LALBA) from Bos taurus (Bovine).